A 651-amino-acid polypeptide reads, in one-letter code: Mitogen-activated protein kinase kinase kinase 2 (651 aa).

A Protein kinase domain is found at 68 to 330 (WRKGQLIGRG…ASELLKHPFV (263 aa)). ATP is bound by residues 74 to 82 (IGRGAFGTV) and Lys-97. The stretch at 105–130 (CASKEKTQAHIQELEEEVKLLKNLSH) forms a coiled coil. Residues Lys-108 and Lys-110 each participate in a glycyl lysine isopeptide (Lys-Gly) (interchain with G-Cter in ubiquitin) cross-link. The Proton acceptor role is filled by Asp-196. 3 disordered regions span residues 460–483 (GNGETETKVSMEVDHPSYSEDENE), 537–601 (RGFL…VALS), and 618–651 (KRREITRQAGMGSSPRDRSLSRHREKSRFASPGK). A compositionally biased stretch (basic and acidic residues) spans 464–477 (TETKVSMEVDHPSY). Positions 570–599 (SPESGNSSGAPKNSNASAGAEQESNSQSVA) are enriched in polar residues. The stretch at 605–628 (RKWKEELDQELERKRREITRQAGM) forms a coiled coil.

The protein belongs to the protein kinase superfamily. STE Ser/Thr protein kinase family. MAP kinase kinase kinase subfamily. Expressed in roots and flowers.

The protein localises to the cytoplasm. Its subcellular location is the cytoskeleton. The enzyme catalyses L-seryl-[protein] + ATP = O-phospho-L-seryl-[protein] + ADP + H(+). The catalysed reaction is L-threonyl-[protein] + ATP = O-phospho-L-threonyl-[protein] + ADP + H(+). In terms of biological role, involved in cortical microtubules organization and stabilization by regulating the phosphorylation state of microtubule-associated proteins such as MAP65-1. The chain is Mitogen-activated protein kinase kinase kinase 2 (ANP2) from Arabidopsis thaliana (Mouse-ear cress).